We begin with the raw amino-acid sequence, 401 residues long: MSDSVNLDEPSTNSTHFLQCLVTEPRKELQGSRDTHVSYLIITKTNLSIFTRAECKVRRRFSDFVKLQEILSRMNEDCVVPPLPAKHKLEYIKGGRFSDNFINRRAKLLNRYITRCALHPVLHQSPHFIAFLENPNWNNYVRFFIQPKLNNTSKLDEISDSLLNAFSKLKEEPTEFDIQRDHVQQFMFGISNLEGSIQKLLRLEKALESDYEDVSIQFDRLASLDQALDVPIESIQNALQQTGTEYANLTEKLTLLLDTIKDVESYAHSLKELLKRRDQKQQDVEALQEYSAKLSLERDKISSGGSNGFSLSKTLDDLRGIDHNDTRLKRLEHVQSELQAVEQAIQEASAVHDAFNQRVREESKLFDSVRQSEMLSAISDYANVHVEFFTNIRDLWIRVKQ.

The PX domain occupies 17-139 (FLQCLVTEPR…AFLENPNWNN (123 aa)). Residues R60, S62, K86, and R105 each coordinate a 1,2-diacyl-sn-glycero-3-phospho-(1D-myo-inositol-3-phosphate). S62 carries the phosphoserine modification. A coiled-coil region spans residues 190 to 292 (ISNLEGSIQK…DVEALQEYSA (103 aa)).

It belongs to the sorting nexin family.

It is found in the cytoplasm. The protein localises to the cytosol. The protein resides in the preautophagosomal structure membrane. It localises to the endosome membrane. Sorting nexin, involved in the separation or division of vacuoles throughout the entire life cycle of the cells. Involved in retrieval of late-Golgi SNAREs from post-Golgi endosomes to the trans-Golgi network, for cytoplasm to vacuole transport (Cvt), and autophagy of large cargos including mitophagy, pexophagy and glycophagy. This is Sorting nexin-4 (snx4) from Schizosaccharomyces pombe (strain 972 / ATCC 24843) (Fission yeast).